A 504-amino-acid chain; its full sequence is GTPase Der (504 aa).

An EngA-type G 1 domain is found at 3 to 166; sequence PVVALVGRPN…QVLAPLAEKL (164 aa). GTP is bound by residues 9–16, 56–60, and 118–121; these read GRPNVGKS, DTGGI, and NKTD. The interval 171-190 is disordered; sequence VDSDENVADDEQDEWDSDFD. Positions 172–190 are enriched in acidic residues; sequence DSDENVADDEQDEWDSDFD. The 174-residue stretch at 216-389 folds into the EngA-type G 2 domain; that stretch reads IKIAIVGRPN…SIQEAYQCAT (174 aa). GTP-binding positions include 222 to 229, 269 to 273, and 334 to 337; these read GRPNVGKS, DTAGV, and NKWD. Residues 390 to 474 enclose the KH-like domain; sequence KKMTTSMLTR…PIRVLFQEGN (85 aa).

It belongs to the TRAFAC class TrmE-Era-EngA-EngB-Septin-like GTPase superfamily. EngA (Der) GTPase family. In terms of assembly, associates with the 50S ribosomal subunit.

Its function is as follows. GTPase that plays an essential role in the late steps of ribosome biogenesis. In Glaesserella parasuis serovar 5 (strain SH0165) (Haemophilus parasuis), this protein is GTPase Der.